The chain runs to 763 residues: Hormone-sensitive lipase (763 aa).

The short motif at 350-352 (HGG) is the Involved in the stabilization of the negatively charged intermediate by the formation of the oxyanion hole element. Serine 424 is a catalytic residue. Serine 552 is modified (phosphoserine). Serine 554 bears the Phosphoserine; by AMPK mark. Phosphoserine occurs at positions 595, 627, and 649. A compositionally biased stretch (basic and acidic residues) spans 616 to 627 (AREEAEAKEGLS). Positions 616–652 (AREEAEAKEGLSAKDGSSRVSNAFPEGFHPRRTSQGA) are disordered. Active-site residues include aspartate 692 and histidine 722.

The protein belongs to the 'GDXG' lipolytic enzyme family. As to quaternary structure, monomer and homodimer. Interacts with CAVIN1 in the adipocyte cytoplasm. Interacts with PLIN5. Post-translationally, phosphorylation by AMPK reduces its translocation towards the lipid droplets.

It is found in the cell membrane. It localises to the membrane. Its subcellular location is the caveola. The protein localises to the cytoplasm. The protein resides in the cytosol. It is found in the lipid droplet. It carries out the reaction a diacylglycerol + H2O = a monoacylglycerol + a fatty acid + H(+). The catalysed reaction is a triacylglycerol + H2O = a diacylglycerol + a fatty acid + H(+). The enzyme catalyses a monoacylglycerol + H2O = glycerol + a fatty acid + H(+). It catalyses the reaction Hydrolyzes glycerol monoesters of long-chain fatty acids.. It carries out the reaction 1,2-di-(9Z-octadecenoyl)-glycerol + (9Z)-octadecenoate + H(+) = 1,2,3-tri-(9Z-octadecenoyl)-glycerol + H2O. The catalysed reaction is 2,3-di-(9Z)-octadecenoyl-sn-glycerol + H2O = 2-(9Z-octadecenoyl)-glycerol + (9Z)-octadecenoate + H(+). The enzyme catalyses cholesteryl (9Z-octadecenoate) + H2O = cholesterol + (9Z)-octadecenoate + H(+). It catalyses the reaction 1,2,3-tri-(9Z-octadecenoyl)-glycerol + H2O = di-(9Z)-octadecenoylglycerol + (9Z)-octadecenoate + H(+). It carries out the reaction all-trans-retinyl hexadecanoate + H2O = all-trans-retinol + hexadecanoate + H(+). The catalysed reaction is 1,2-di-(9Z-octadecenoyl)-glycerol + H2O = (9Z-octadecenoyl)-glycerol + (9Z)-octadecenoate + H(+). The enzyme catalyses 2-(5Z,8Z,11Z,14Z-eicosatetraenoyl)-glycerol + H2O = glycerol + (5Z,8Z,11Z,14Z)-eicosatetraenoate + H(+). It catalyses the reaction 1-(9Z-octadecenoyl)-glycerol + H2O = glycerol + (9Z)-octadecenoate + H(+). It carries out the reaction 2-(9Z-octadecenoyl)-glycerol + H2O = glycerol + (9Z)-octadecenoate + H(+). The catalysed reaction is 1-O-hexadecyl-2-acetyl-sn-glycerol + H2O = 1-O-hexadecyl-sn-glycerol + acetate + H(+). The enzyme catalyses 1,2-di-(9Z-octadecenoyl)-sn-glycerol + H2O = (9Z-octadecenoyl)-glycerol + (9Z)-octadecenoate + H(+). It catalyses the reaction 1,3-di-(9Z-octadecenoyl)-glycerol + H2O = 1-(9Z-octadecenoyl)-glycerol + (9Z)-octadecenoate + H(+). It carries out the reaction 1,2-di-(9Z-octadecenoyl)-glycerol + H2O = 2-(9Z-octadecenoyl)-glycerol + (9Z)-octadecenoate + H(+). The protein operates within glycerolipid metabolism; triacylglycerol degradation. Lipase with broad substrate specificity, catalyzing the hydrolysis of triacylglycerols (TAGs), diacylglycerols (DAGs), monoacylglycerols (MAGs), cholesteryl esters and retinyl esters. Shows a preferential hydrolysis of DAGs over TAGs and MAGs. Preferentially hydrolyzes fatty acid (FA) esters at the sn-3 position of the glycerol backbone in DAGs and FA esters at the sn-1 and sn-2 positions of the glycerol backbone in TAGs. Catalyzes the hydrolysis of 2-arachidonoylglycerol, an endocannabinoid and of 2-acetyl monoalkylglycerol ether, the penultimate precursor of the pathway for de novo synthesis of platelet-activating factor. In adipose tissue and heart, it primarily hydrolyzes stored triglycerides to free fatty acids, while in steroidogenic tissues, it principally converts cholesteryl esters to free cholesterol for steroid hormone production. In Ictidomys tridecemlineatus (Thirteen-lined ground squirrel), this protein is Hormone-sensitive lipase (LIPE).